The sequence spans 72 residues: IIEPSLKALASKFNCDKMICRKCYVRCPRRTPQRTCRVLTWIPQARLPPRATNCRKRKCGHTNHVRPKKKLK.

The protein belongs to the eukaryotic ribosomal protein eL40 family.

This Nicotiana tabacum (Common tobacco) protein is Large ribosomal subunit protein eL40.